We begin with the raw amino-acid sequence, 235 residues long: uncharacterized protein (235 aa).

Disordered regions lie at residues 1-47 (MSHK…QSTN) and 78-128 (QEHH…KQPQ). Over residues 20–33 (HPPGQSLSSISWSP) the composition is skewed to polar residues. The span at 84–98 (QQQQQQRQNIRSQNS) shows a compositional bias: low complexity. Residues 106–128 (VQESQWTSSASNSSLKKQEKQPQ) are compositionally biased toward polar residues.

This is an uncharacterized protein from Saccharomyces cerevisiae (strain ATCC 204508 / S288c) (Baker's yeast).